The primary structure comprises 197 residues: Adenylate kinase (197 aa).

19–24 provides a ligand contact to ATP; that stretch reads GSGKGT. The interval 39–68 is NMP; that stretch reads SSGDLLRAEVQSGSPKGKELKAMMERGELV. AMP is bound by residues Ser-40, Arg-45, 66-68, 95-98, and Gln-102; these read ELV and RYPR. Residues 132–142 are LID; the sequence is KRAETSNRVDD. Residue Arg-133 coordinates ATP. AMP-binding residues include Arg-139 and Arg-150. Residue Gly-178 coordinates ATP.

Belongs to the adenylate kinase family. As to quaternary structure, monomer.

The protein resides in the cytoplasm. The catalysed reaction is AMP + ATP = 2 ADP. In terms of biological role, catalyzes the reversible transfer of the terminal phosphate group between ATP and AMP. Plays an important role in cellular energy homeostasis and in adenine nucleotide metabolism. This chain is Adenylate kinase, found in Schistosoma mansoni (Blood fluke).